Here is a 210-residue protein sequence, read N- to C-terminus: Shikimate kinase (210 aa).

34 to 39 is an ATP binding site; that stretch reads GVGKSV. S38 is a binding site for Mg(2+). 3 residues coordinate substrate: D56, R80, and G102. Position 140 (R140) interacts with ATP. Substrate is bound at residue R159.

The protein belongs to the shikimate kinase family. In terms of assembly, monomer. Requires Mg(2+) as cofactor.

It localises to the cytoplasm. The catalysed reaction is shikimate + ATP = 3-phosphoshikimate + ADP + H(+). It participates in metabolic intermediate biosynthesis; chorismate biosynthesis; chorismate from D-erythrose 4-phosphate and phosphoenolpyruvate: step 5/7. Its function is as follows. Catalyzes the specific phosphorylation of the 3-hydroxyl group of shikimic acid using ATP as a cosubstrate. The protein is Shikimate kinase of Bartonella henselae (strain ATCC 49882 / DSM 28221 / CCUG 30454 / Houston 1) (Rochalimaea henselae).